The following is a 363-amino-acid chain: Aminomethyltransferase (363 aa).

The protein belongs to the GcvT family. As to quaternary structure, the glycine cleavage system is composed of four proteins: P, T, L and H.

The catalysed reaction is N(6)-[(R)-S(8)-aminomethyldihydrolipoyl]-L-lysyl-[protein] + (6S)-5,6,7,8-tetrahydrofolate = N(6)-[(R)-dihydrolipoyl]-L-lysyl-[protein] + (6R)-5,10-methylene-5,6,7,8-tetrahydrofolate + NH4(+). Functionally, the glycine cleavage system catalyzes the degradation of glycine. This chain is Aminomethyltransferase, found in Staphylococcus epidermidis (strain ATCC 35984 / DSM 28319 / BCRC 17069 / CCUG 31568 / BM 3577 / RP62A).